The following is a 181-amino-acid chain: Protein TrbB (181 aa).

Residues 1-22 (MSLTKSLLFTLLLSAAAVQAST) form the signal peptide. In terms of domain architecture, Thioredoxin spans 37–172 (TQPAQPAAGT…FMARVDTVLQ (136 aa)).

It localises to the periplasm. This Escherichia coli (strain K12) protein is Protein TrbB (trbB).